We begin with the raw amino-acid sequence, 101 residues long: NAD(P)H-quinone oxidoreductase subunit 4L, chloroplastic (101 aa).

3 helical membrane passes run I2 to L22, M32 to V52, and V61 to I81.

It belongs to the complex I subunit 4L family. NDH is composed of at least 16 different subunits, 5 of which are encoded in the nucleus.

The protein resides in the plastid. It is found in the chloroplast thylakoid membrane. It carries out the reaction a plastoquinone + NADH + (n+1) H(+)(in) = a plastoquinol + NAD(+) + n H(+)(out). The catalysed reaction is a plastoquinone + NADPH + (n+1) H(+)(in) = a plastoquinol + NADP(+) + n H(+)(out). NDH shuttles electrons from NAD(P)H:plastoquinone, via FMN and iron-sulfur (Fe-S) centers, to quinones in the photosynthetic chain and possibly in a chloroplast respiratory chain. The immediate electron acceptor for the enzyme in this species is believed to be plastoquinone. Couples the redox reaction to proton translocation, and thus conserves the redox energy in a proton gradient. The protein is NAD(P)H-quinone oxidoreductase subunit 4L, chloroplastic of Nephroselmis olivacea (Green alga).